Reading from the N-terminus, the 121-residue chain is NADH-quinone oxidoreductase subunit A 2 (121 aa).

The next 3 membrane-spanning stretches (helical) occupy residues 6–26 (FLPV…TLFV), 60–80 (VPFF…MFLF), and 89–109 (IGFV…VGFA).

This sequence belongs to the complex I subunit 3 family. NDH-1 is composed of 14 different subunits. Subunits NuoA, H, J, K, L, M, N constitute the membrane sector of the complex.

Its subcellular location is the cell inner membrane. The enzyme catalyses a quinone + NADH + 5 H(+)(in) = a quinol + NAD(+) + 4 H(+)(out). Functionally, NDH-1 shuttles electrons from NADH, via FMN and iron-sulfur (Fe-S) centers, to quinones in the respiratory chain. The immediate electron acceptor for the enzyme in this species is believed to be ubiquinone. Couples the redox reaction to proton translocation (for every two electrons transferred, four hydrogen ions are translocated across the cytoplasmic membrane), and thus conserves the redox energy in a proton gradient. The chain is NADH-quinone oxidoreductase subunit A 2 from Rhizobium meliloti (strain 1021) (Ensifer meliloti).